Here is an 837-residue protein sequence, read N- to C-terminus: V-type proton ATPase 116 kDa subunit a 1 (837 aa).

The Cytoplasmic portion of the chain corresponds to 1–388; the sequence is MGELFRSEEM…DAYGIGTYRE (388 aa). Residues Thr-250 and Thr-360 each carry the phosphothreonine modification. Residue Tyr-364 is modified to Phosphotyrosine. A helical transmembrane segment spans residues 389–407; it reads INPAPYTIITFPFLFAVMF. Residues 408–409 are Vacuolar-facing; that stretch reads GD. A helical transmembrane segment spans residues 410 to 426; that stretch reads FGHGILMTLFAVWMVLR. Residues 427-441 lie on the Cytoplasmic side of the membrane; it reads ESRILSQKNENEMFS. A helical membrane pass occupies residues 442-471; sequence TVFSGRYIILLMGVFSMYTGLIYNDCFSKS. Residues 472-534 are Vacuolar-facing; that stretch reads LNIFGSSWSV…ATNKLTFLNS (63 aa). The chain crosses the membrane as a helical span at residues 535–554; that stretch reads FKMKMSVILGIIHMLFGVSL. The Cytoplasmic portion of the chain corresponds to 555–572; sequence SLFNHIYFKKPLNIYFGF. A helical transmembrane segment spans residues 573–593; that stretch reads IPEIIFMTSLFGYLVILIFYK. The Vacuolar portion of the chain corresponds to 594-638; sequence WTAYDAHTSENAPSLLIHFINMFLFSYPESGYSMLYSGQKGIQCF. The chain crosses the membrane as a helical span at residues 639-658; that stretch reads LVVVALLCVPWMLLFKPLVL. The Cytoplasmic segment spans residues 659 to 724; it reads RRQYLRRKHL…ATMVHQAIHT (66 aa). The helical transmembrane segment at 725 to 749 threads the bilayer; that stretch reads IEYCLGCISNTASYLRLWALSLAHA. Residues 750-770 lie on the Vacuolar side of the membrane; sequence QLSEVLWTMVIHIGLSVKSLA. Residues 771–809 traverse the membrane as a helical segment; that stretch reads GGLVLFFFFTAFATLTVAILLIMEGLSAFLHALRLHWVE. Over 810 to 837 the chain is Cytoplasmic; the sequence is FQNKFYSGTGFKFLPFSFEHIREGKFGE.

The protein belongs to the V-ATPase 116 kDa subunit family. In terms of assembly, V-ATPase is a heteromultimeric enzyme made up of two complexes: the ATP-hydrolytic V1 complex and the proton translocation V0 complex. The V1 complex consists of three catalytic AB heterodimers that form a heterohexamer, three peripheral stalks each consisting of EG heterodimers, one central rotor including subunits D and F, and the regulatory subunits C and H. The proton translocation complex V0 consists of the proton transport subunit a, a ring of proteolipid subunits c9c'', rotary subunit d, subunits e and f, and the accessory subunits ATP6AP1/Ac45 and ATP6AP2/PRR. Interacts with SPAAR.

It localises to the cytoplasmic vesicle. The protein localises to the clathrin-coated vesicle membrane. It is found in the secretory vesicle. Its subcellular location is the synaptic vesicle membrane. The protein resides in the melanosome. Subunit of the V0 complex of vacuolar(H+)-ATPase (V-ATPase), a multisubunit enzyme composed of a peripheral complex (V1) that hydrolyzes ATP and a membrane integral complex (V0) that translocates protons. V-ATPase is responsible for the acidification of various organelles, such as lysosomes, endosomes, the trans-Golgi network, and secretory granules, including synaptic vesicles. In certain cell types, can be exported to the plasma membrane, where it is involved in the acidification of the extracellular environment. Required for assembly and activity of the vacuolar ATPase. Through its action on compartment acidification, plays an essential role in neuronal development in terms of integrity and connectivity of neurons. The chain is V-type proton ATPase 116 kDa subunit a 1 (ATP6V0A1) from Pongo abelii (Sumatran orangutan).